A 106-amino-acid polypeptide reads, in one-letter code: MDTSGPAAFVNGEILKMFVGRRVRTVVQAQREEGGLLIGQSTDGHQLTIKGASGAPMSHYVEIIGIAEPNQAIRAEVCTDFGENFDPAPFNGLCKLANGQMKDLFL.

Belongs to the replication factor A protein 3 family. As to quaternary structure, component of the heterotrimeric canonical replication protein A complex (RPA). Interacts with RPA1B, RPA2A, RPA2B and RPA2C.

The protein localises to the nucleus. As part of the replication protein A (RPA/RP-A), a single-stranded DNA-binding heterotrimeric complex, may play an essential role in DNA replication, recombination and repair. Binds and stabilizes single-stranded DNA intermediates, preventing complementary DNA reannealing and recruiting different proteins involved in DNA metabolism. The chain is Replication protein A 14 kDa subunit (RPA3) from Oryza sativa subsp. japonica (Rice).